Consider the following 187-residue polypeptide: Ion-translocating oxidoreductase complex subunit B (187 aa).

A hydrophobic region spans residues 1-23 (MIAAAASMSALGLGLGYLLGAAA). The 4Fe-4S domain occupies 29–88 (ETPPIVEEIAKILPGTNCGACGFPGCNGLAEAMAEGNAPVTACTPGGRDVALALAEIVTV). The [4Fe-4S] cluster site is built by cysteine 46, cysteine 49, cysteine 54, cysteine 71, cysteine 112, cysteine 115, cysteine 118, cysteine 122, cysteine 142, cysteine 145, cysteine 148, and cysteine 152. 2 4Fe-4S ferredoxin-type domains span residues 103–132 (MVAFVFEDHCTGCQKCFKRCPTDAIVGGAK) and 133–162 (QIHTVVMDACIGCDACIEVCPTEAIVSRVK).

Belongs to the 4Fe4S bacterial-type ferredoxin family. RnfB subfamily. As to quaternary structure, the complex is composed of six subunits: RnfA, RnfB, RnfC, RnfD, RnfE and RnfG. It depends on [4Fe-4S] cluster as a cofactor.

It is found in the cellular chromatophore membrane. Part of a membrane-bound complex that couples electron transfer with translocation of ions across the membrane. Required for nitrogen fixation. Involved in electron transfer to nitrogenase. The protein is Ion-translocating oxidoreductase complex subunit B of Rhodobacter capsulatus (Rhodopseudomonas capsulata).